A 406-amino-acid polypeptide reads, in one-letter code: 5-methylthioadenosine/S-adenosylhomocysteine deaminase (406 aa).

The Zn(2+) site is built by His-55 and His-57. Substrate-binding residues include Glu-84, Arg-136, Arg-148, and His-173. Position 200 (His-200) interacts with Zn(2+). The substrate site is built by Glu-203 and Asp-279. Asp-279 contributes to the Zn(2+) binding site.

It belongs to the metallo-dependent hydrolases superfamily. MTA/SAH deaminase family. Requires Zn(2+) as cofactor.

It carries out the reaction S-adenosyl-L-homocysteine + H2O + H(+) = S-inosyl-L-homocysteine + NH4(+). It catalyses the reaction S-methyl-5'-thioadenosine + H2O + H(+) = S-methyl-5'-thioinosine + NH4(+). Functionally, catalyzes the deamination of 5-methylthioadenosine and S-adenosyl-L-homocysteine into 5-methylthioinosine and S-inosyl-L-homocysteine, respectively. Is also able to deaminate adenosine. Adenosine-5-monophosphate (AMP) and S-adenosyl-L-methionine (SAM) are not enzyme substrates. This Thermotoga maritima (strain ATCC 43589 / DSM 3109 / JCM 10099 / NBRC 100826 / MSB8) protein is 5-methylthioadenosine/S-adenosylhomocysteine deaminase (mtaD).